The following is a 528-amino-acid chain: D-3-phosphoglycerate dehydrogenase (528 aa).

NAD(+) contacts are provided by residues 151–152 (RI), aspartate 171, 230–232 (AAR), and aspartate 256. Arginine 232 is an active-site residue. Glutamate 261 is a catalytic residue. Catalysis depends on histidine 279, which acts as the Proton donor. 279-282 (HLGA) lines the NAD(+) pocket. The 73-residue stretch at 455-527 (NLIIHYVDRP…DAYKLEVVDL (73 aa)) folds into the ACT domain.

Belongs to the D-isomer specific 2-hydroxyacid dehydrogenase family.

The catalysed reaction is (2R)-3-phosphoglycerate + NAD(+) = 3-phosphooxypyruvate + NADH + H(+). It carries out the reaction (R)-2-hydroxyglutarate + NAD(+) = 2-oxoglutarate + NADH + H(+). Its pathway is amino-acid biosynthesis; L-serine biosynthesis; L-serine from 3-phospho-D-glycerate: step 1/3. Its function is as follows. Catalyzes the reversible oxidation of 3-phospho-D-glycerate to 3-phosphonooxypyruvate, the first step of the phosphorylated L-serine biosynthesis pathway. Also catalyzes the reversible oxidation of 2-hydroxyglutarate to 2-oxoglutarate. In Mycobacterium bovis (strain ATCC BAA-935 / AF2122/97), this protein is D-3-phosphoglycerate dehydrogenase (serA).